We begin with the raw amino-acid sequence, 312 residues long: Beta-ketoacyl-[acyl-carrier-protein] synthase III 1 (312 aa).

Catalysis depends on residues Cys-113 and His-237. Residues 238–242 (QANIR) form an ACP-binding region. Asn-267 is an active-site residue.

This sequence belongs to the thiolase-like superfamily. FabH family. As to quaternary structure, homodimer.

The protein localises to the cytoplasm. The catalysed reaction is malonyl-[ACP] + acetyl-CoA + H(+) = 3-oxobutanoyl-[ACP] + CO2 + CoA. The protein operates within lipid metabolism; fatty acid biosynthesis. Functionally, catalyzes the condensation reaction of fatty acid synthesis by the addition to an acyl acceptor of two carbons from malonyl-ACP. Catalyzes the first condensation reaction which initiates fatty acid synthesis and may therefore play a role in governing the total rate of fatty acid production. Possesses both acetoacetyl-ACP synthase and acetyl transacylase activities. Its substrate specificity determines the biosynthesis of branched-chain and/or straight-chain of fatty acids. This Halalkalibacterium halodurans (strain ATCC BAA-125 / DSM 18197 / FERM 7344 / JCM 9153 / C-125) (Bacillus halodurans) protein is Beta-ketoacyl-[acyl-carrier-protein] synthase III 1.